The primary structure comprises 312 residues: Olfactory receptor 10D3 (312 aa).

Residues 1–26 are Extracellular-facing; that stretch reads MEIKNCSVVTEFILLGIPHTEGFETL. N5 carries an N-linked (GlcNAc...) asparagine glycan. Residues 27–47 traverse the membrane as a helical segment; it reads LFVLFLPFYACTLVGNVSILV. Residues 48-57 lie on the Cytoplasmic side of the membrane; the sequence is AVISSTRLHT. Residues 58–78 form a helical membrane-spanning segment; it reads PMYFFLGNLSVFDMGFSSVTC. At 79 to 97 the chain is on the extracellular side; sequence PKMLFYLMGLSRLISYQDC. C97 and C179 form a disulfide bridge. A helical membrane pass occupies residues 98–118; it reads VSQLFFFHFLGSIECFLYTVM. Residues 119–139 are Cytoplasmic-facing; that stretch reads AYDRFAAICHPLRYSVIMNSK. The chain crosses the membrane as a helical span at residues 140-160; the sequence is ICVALAVGTWLLGCFHSSVLT. The Extracellular portion of the chain corresponds to 161–197; it reads SLTFTLPYCGPNEVDHFFCDIPAILPLASADTSLAQR. A helical transmembrane segment spans residues 198–218; the sequence is VSFTNVGLVSLVCFLLILLSY. Residues 219–239 are Cytoplasmic-facing; sequence TRITISILSIQSTEGRQRAFS. A helical transmembrane segment spans residues 240–260; that stretch reads TCSAHLIAILCAYGPIITIYL. Residues 261 to 266 lie on the Extracellular side of the membrane; that stretch reads QPTPNP. Residues 267-287 traverse the membrane as a helical segment; it reads MLGTVVQILMNLVGPMLNPLI. Over 288–312 the chain is Cytoplasmic; the sequence is YTLRNKEVKIALKKILHGKGSVSEG.

The protein belongs to the G-protein coupled receptor 1 family.

Its subcellular location is the cell membrane. Potential odorant receptor. This is Olfactory receptor 10D3 from Mus musculus (Mouse).